A 375-amino-acid chain; its full sequence is Probable serine/threonine-protein kinase PBL28 (375 aa).

The residue at position 65 (T65) is a Phosphothreonine. Positions 76–356 (FSDENLLGKG…MDCVKELQLI (281 aa)) constitute a Protein kinase domain. ATP is bound by residues 82–90 (LGKGGFGRV) and K104. A Phosphotyrosine modification is found at Y152. Residue D205 is the Proton acceptor of the active site. Phosphothreonine is present on T245. Y253 carries the phosphotyrosine modification.

It belongs to the protein kinase superfamily. Ser/Thr protein kinase family.

The protein localises to the cell membrane. The catalysed reaction is L-seryl-[protein] + ATP = O-phospho-L-seryl-[protein] + ADP + H(+). The enzyme catalyses L-threonyl-[protein] + ATP = O-phospho-L-threonyl-[protein] + ADP + H(+). May be involved in plant defense signaling. The polypeptide is Probable serine/threonine-protein kinase PBL28 (Arabidopsis thaliana (Mouse-ear cress)).